The following is a 384-amino-acid chain: Aurora kinase (384 aa).

2 stretches are compositionally biased toward polar residues: residues 1-12 and 19-29; these read MSYPNNKENSNN and SVPSKQPQRVL. The interval 1–100 is disordered; that stretch reads MSYPNNKENS…SSSSSSSQSV (100 aa). Low complexity predominate over residues 30 to 99; sequence QQQNTNINNH…SSSSSSSSQS (70 aa). The 251-residue stretch at 110–360 folds into the Protein kinase domain; it reads FDIGKLLGMG…LKDVINHPWI (251 aa). ATP-binding positions include 116-124 and Lys-139; that span reads LGMGRFGHV. Catalysis depends on Asp-233, which acts as the Proton acceptor.

It belongs to the protein kinase superfamily. Ser/Thr protein kinase family. Aurora subfamily. Interacts with icpA. Forms a complex at the central spindle.

Its subcellular location is the cytoplasm. The protein localises to the chromosome. It is found in the centromere. The protein resides in the cytoskeleton. It localises to the spindle pole. Its subcellular location is the cleavage furrow. The protein localises to the cell projection. It is found in the neuron projection. The enzyme catalyses L-seryl-[protein] + ATP = O-phospho-L-seryl-[protein] + ADP + H(+). The catalysed reaction is L-threonyl-[protein] + ATP = O-phospho-L-threonyl-[protein] + ADP + H(+). Part of a chromosomal passenger complex. The sequence is that of Aurora kinase (aurK) from Dictyostelium discoideum (Social amoeba).